A 292-amino-acid chain; its full sequence is UPF0761 membrane protein Ping_3482 (292 aa).

A run of 6 helical transmembrane segments spans residues 43-63 (LLSI…FPVF), 100-120 (MSMM…STID), 139-159 (FTIY…SLAL), 179-199 (LLSL…YTLV), 209-229 (ALIG…LFRL), and 243-263 (ALAV…IVLI).

The protein belongs to the UPF0761 family.

It is found in the cell inner membrane. The protein is UPF0761 membrane protein Ping_3482 of Psychromonas ingrahamii (strain DSM 17664 / CCUG 51855 / 37).